A 73-amino-acid polypeptide reads, in one-letter code: Translation initiation factor IF-1 (73 aa).

Residues Met1 to Lys73 form the S1-like domain.

Belongs to the IF-1 family. In terms of assembly, component of the 30S ribosomal translation pre-initiation complex which assembles on the 30S ribosome in the order IF-2 and IF-3, IF-1 and N-formylmethionyl-tRNA(fMet); mRNA recruitment can occur at any time during PIC assembly.

The protein localises to the cytoplasm. Its function is as follows. One of the essential components for the initiation of protein synthesis. Stabilizes the binding of IF-2 and IF-3 on the 30S subunit to which N-formylmethionyl-tRNA(fMet) subsequently binds. Helps modulate mRNA selection, yielding the 30S pre-initiation complex (PIC). Upon addition of the 50S ribosomal subunit IF-1, IF-2 and IF-3 are released leaving the mature 70S translation initiation complex. This chain is Translation initiation factor IF-1, found in Mycolicibacterium smegmatis (strain ATCC 700084 / mc(2)155) (Mycobacterium smegmatis).